Here is a 209-residue protein sequence, read N- to C-terminus: Uracil phosphoribosyltransferase (209 aa).

5-phospho-alpha-D-ribose 1-diphosphate is bound by residues Arg79, Arg104, and 131 to 139; that span reads DPMLATGGT. Uracil contacts are provided by residues Ile194 and 199 to 201; that span reads GDA. Residue Asp200 coordinates 5-phospho-alpha-D-ribose 1-diphosphate.

This sequence belongs to the UPRTase family. The cofactor is Mg(2+).

It catalyses the reaction UMP + diphosphate = 5-phospho-alpha-D-ribose 1-diphosphate + uracil. Its pathway is pyrimidine metabolism; UMP biosynthesis via salvage pathway; UMP from uracil: step 1/1. With respect to regulation, allosterically activated by GTP. Catalyzes the conversion of uracil and 5-phospho-alpha-D-ribose 1-diphosphate (PRPP) to UMP and diphosphate. This chain is Uracil phosphoribosyltransferase, found in Pseudoalteromonas translucida (strain TAC 125).